A 496-amino-acid polypeptide reads, in one-letter code: MSYLLALDQGTTSSRALVLDRDGQVKGAAQQTFAQHYPQPGWVEHDPAEILATQFDCARTALERAGVAASALAAVGITNQRETTLLWERSTGRALAPAIVWQDRRTAAACDRLREAGHADTIRASTGLEVDAYFSATKLAWLLDHVPGARARARAGELAFGTVDSWLVWHLSGGALHVTDAGNASRTMLFNIHRCEWDETLLALLDIPPALLPRVVDSSGVCGTTCAEVLGAAVPIAGIGGDQQAATFGQACFAPGMAKNTYGTGCFLLMNTGAAPVTSTNRLLTTIGWRSRGETCYALEGSIFIGGALVQWLRDGLGLIRRAEDVEALAASVPDSEGVVLVPAFTGLGAPYWDAYARGTLFGLTRGTGAAHIARAALEAIALQTVDLVAAMDRDGAGPLAELRVDGGAAANDLLMQIQADLLGVPVVRPKMLETTALGAAYLAGLGVGMWSGIEELASHWRAERRFEPVMAEDRREAAIARWRRAVERARGWVAA.

T11 provides a ligand contact to ADP. ATP contacts are provided by T11, T12, and S13. T11 is a binding site for sn-glycerol 3-phosphate. R15 contributes to the ADP binding site. Positions 81, 82, 133, and 242 each coordinate sn-glycerol 3-phosphate. Glycerol-binding residues include R81, E82, Y133, D242, and Q243. ADP-binding residues include T264 and G307. Residues T264, G307, Q311, and G408 each coordinate ATP. Residues G408 and N412 each contribute to the ADP site.

This sequence belongs to the FGGY kinase family.

The enzyme catalyses glycerol + ATP = sn-glycerol 3-phosphate + ADP + H(+). Its pathway is polyol metabolism; glycerol degradation via glycerol kinase pathway; sn-glycerol 3-phosphate from glycerol: step 1/1. Its activity is regulated as follows. Inhibited by fructose 1,6-bisphosphate (FBP). Functionally, key enzyme in the regulation of glycerol uptake and metabolism. Catalyzes the phosphorylation of glycerol to yield sn-glycerol 3-phosphate. This chain is Glycerol kinase, found in Aromatoleum aromaticum (strain DSM 19018 / LMG 30748 / EbN1) (Azoarcus sp. (strain EbN1)).